Consider the following 173-residue polypeptide: Crossover junction endodeoxyribonuclease RuvC (173 aa).

Active-site residues include Asp-8, Glu-67, and Asp-139. Asp-8, Glu-67, and Asp-139 together coordinate Mg(2+).

It belongs to the RuvC family. In terms of assembly, homodimer which binds Holliday junction (HJ) DNA. The HJ becomes 2-fold symmetrical on binding to RuvC with unstacked arms; it has a different conformation from HJ DNA in complex with RuvA. In the full resolvosome a probable DNA-RuvA(4)-RuvB(12)-RuvC(2) complex forms which resolves the HJ. Requires Mg(2+) as cofactor.

It is found in the cytoplasm. The enzyme catalyses Endonucleolytic cleavage at a junction such as a reciprocal single-stranded crossover between two homologous DNA duplexes (Holliday junction).. The RuvA-RuvB-RuvC complex processes Holliday junction (HJ) DNA during genetic recombination and DNA repair. Endonuclease that resolves HJ intermediates. Cleaves cruciform DNA by making single-stranded nicks across the HJ at symmetrical positions within the homologous arms, yielding a 5'-phosphate and a 3'-hydroxyl group; requires a central core of homology in the junction. The consensus cleavage sequence is 5'-(A/T)TT(C/G)-3'. Cleavage occurs on the 3'-side of the TT dinucleotide at the point of strand exchange. HJ branch migration catalyzed by RuvA-RuvB allows RuvC to scan DNA until it finds its consensus sequence, where it cleaves and resolves the cruciform DNA. The sequence is that of Crossover junction endodeoxyribonuclease RuvC from Shewanella sediminis (strain HAW-EB3).